Consider the following 77-residue polypeptide: Putative defensin-like protein 118 (77 aa).

The signal sequence occupies residues 1–25 (MSKSTILAIFMIVLVLGKVTKETQG). Intrachain disulfides connect Cys29–Cys75, Cys39–Cys58, Cys44–Cys69, and Cys48–Cys71.

It belongs to the DEFL family.

The protein resides in the secreted. This is Putative defensin-like protein 118 (LCR52) from Arabidopsis thaliana (Mouse-ear cress).